The chain runs to 85 residues: Large ribosomal subunit protein bL27 (85 aa).

The segment at 1-23 is disordered; that stretch reads MAHKKGQGSTQNNRDSAGRRLGV.

This sequence belongs to the bacterial ribosomal protein bL27 family.

This chain is Large ribosomal subunit protein bL27, found in Helicobacter hepaticus (strain ATCC 51449 / 3B1).